The following is a 24-amino-acid chain: N-acyl-L-amino acid amidohydrolase (24 aa).

The protein belongs to the peptidase M20 family. As to quaternary structure, homotetramer. The cofactor is Co(2+).

The enzyme catalyses an N-acyl-L-amino acid + H2O = an L-alpha-amino acid + a carboxylate. The catalysed reaction is an N-acetyl-L-cysteine-S-conjugate + H2O = an S-substituted L-cysteine + acetate. In Parageobacillus thermoglucosidasius (Geobacillus thermoglucosidasius), this protein is N-acyl-L-amino acid amidohydrolase.